The sequence spans 207 residues: GTP cyclohydrolase 1 (207 aa).

Cysteine 88, histidine 91, and cysteine 162 together coordinate Zn(2+).

This sequence belongs to the GTP cyclohydrolase I family. In terms of assembly, toroid-shaped homodecamer, composed of two pentamers of five dimers.

It catalyses the reaction GTP + H2O = 7,8-dihydroneopterin 3'-triphosphate + formate + H(+). It participates in cofactor biosynthesis; 7,8-dihydroneopterin triphosphate biosynthesis; 7,8-dihydroneopterin triphosphate from GTP: step 1/1. The protein is GTP cyclohydrolase 1 of Sulfurisphaera tokodaii (strain DSM 16993 / JCM 10545 / NBRC 100140 / 7) (Sulfolobus tokodaii).